Reading from the N-terminus, the 115-residue chain is NAD(P)H-quinone oxidoreductase subunit M (115 aa).

This sequence belongs to the complex I NdhM subunit family. In terms of assembly, NDH-1 can be composed of about 15 different subunits; different subcomplexes with different compositions have been identified which probably have different functions.

Its subcellular location is the cellular thylakoid membrane. The enzyme catalyses a plastoquinone + NADH + (n+1) H(+)(in) = a plastoquinol + NAD(+) + n H(+)(out). The catalysed reaction is a plastoquinone + NADPH + (n+1) H(+)(in) = a plastoquinol + NADP(+) + n H(+)(out). In terms of biological role, NDH-1 shuttles electrons from an unknown electron donor, via FMN and iron-sulfur (Fe-S) centers, to quinones in the respiratory and/or the photosynthetic chain. The immediate electron acceptor for the enzyme in this species is believed to be plastoquinone. Couples the redox reaction to proton translocation, and thus conserves the redox energy in a proton gradient. Cyanobacterial NDH-1 also plays a role in inorganic carbon-concentration. The chain is NAD(P)H-quinone oxidoreductase subunit M from Prochlorococcus marinus (strain SARG / CCMP1375 / SS120).